A 208-amino-acid polypeptide reads, in one-letter code: MSPADSLLAAADNALRTLFAKPGAAEKSPADAVAEAALDPAEKRLAGALMRVNHVGEVCAQALYTAQAALTRDARLRARLQQAAREEIDHLAWTRQRLDALGARTSLLDPLWFAGAFALGLVAAKVGDRVSLGFVAETESQVAAHLQSHLQRLPQQDLASRAVVARMKDDEERHAAQARASGALALPAPVRAAMKAAARLMTSTAHYV.

Fe cation contacts are provided by glutamate 57, glutamate 87, histidine 90, glutamate 139, glutamate 171, and histidine 174.

Belongs to the COQ7 family. It depends on Fe cation as a cofactor.

The protein localises to the cell membrane. It carries out the reaction a 5-methoxy-2-methyl-3-(all-trans-polyprenyl)benzene-1,4-diol + AH2 + O2 = a 3-demethylubiquinol + A + H2O. Its pathway is cofactor biosynthesis; ubiquinone biosynthesis. In terms of biological role, catalyzes the hydroxylation of 2-nonaprenyl-3-methyl-6-methoxy-1,4-benzoquinol during ubiquinone biosynthesis. The sequence is that of 3-demethoxyubiquinol 3-hydroxylase from Verminephrobacter eiseniae (strain EF01-2).